The chain runs to 280 residues: Protein YIP4b (280 aa).

A compositionally biased stretch (polar residues) spans 1–15; that stretch reads MSHNDTIPLYQSSQS. The interval 1-106 is disordered; that stretch reads MSHNDTIPLY…SGFGSPPNTL (106 aa). Over 1-146 the chain is Cytoplasmic; it reads MSHNDTIPLY…DPGKALRDWD (146 aa). Residues 147 to 167 form a helical membrane-spanning segment; that stretch reads LWGPFFFIVFLGLTLSWSASV. Residues 168 to 171 lie on the Lumenal side of the membrane; sequence KKSE. A run of 2 helical transmembrane segments spans residues 172-192 and 193-213; these read VFAVAFALLAAGAVILTLNVL and LLGGHIIFFQSLSLLGYCLFP. Residues 214 to 230 lie on the Lumenal side of the membrane; sequence LDVGAVICMLKDNVILK. The chain crosses the membrane as a helical span at residues 231–251; that stretch reads MVVVSVTLAWSSWAAYPFMSA. The Cytoplasmic portion of the chain corresponds to 252 to 258; it reads AVNPRRK. The chain crosses the membrane as a helical span at residues 259 to 279; sequence ALALYPVFLMYVSVGFLIIAI. Position 280 (asparagine 280) is a topological domain, lumenal.

The protein belongs to the YIP1 family. As to quaternary structure, homodimer and heterodimer with YIP4A. Component of a trans-Golgi network (TGN)-localized ECH/YIP4 complex made of ECH, YIP4A and YIP4B. Interacts directly with ECH. In terms of tissue distribution, expressed in developing root hair cells.

The protein resides in the golgi apparatus. Its subcellular location is the trans-Golgi network membrane. Functionally, together with YIP4A, involved in the regulation of cell elongation during root and hypocotyl growth. YIP4A and YIP4B are central trafficking components in Rho-of-plant (ROPs, e.g. ARAC4/ROP2, ARAC5/ROP4 and ARAC3/ROP6) small GTPases-dependent root hair formation, thus contributing to activation and plasma membrane accumulation of ROPs during hair initiation. The ECH/YIP4 complex is involved in the modulation of the trans-Golgi network (TGN)-mediated trafficking of some proteins and cell wall components (e.g. pectin and hemicellulose) to the cell wall in dark-grown hypocotyls and in secretory cells of the seed coat. The polypeptide is Protein YIP4b (Arabidopsis thaliana (Mouse-ear cress)).